The primary structure comprises 89 residues: Phytosulfokines 1 (89 aa).

The signal sequence occupies residues methionine 1 to glycine 22. The propeptide occupies glutamine 23–aspartate 79. The segment at glutamine 33–serine 70 is disordered. The N-linked (GlcNAc...) asparagine glycan is linked to asparagine 42. Residues tyrosine 80 and tyrosine 82 each carry the sulfotyrosine modification. Positions aspartate 85–proline 89 are excised as a propeptide.

It belongs to the phytosulfokine family. Sulfation is important for activity and for the binding to a putative membrane receptor. Post-translationally, PSK-alpha is produced by endopeptidase digestion. PSK-beta is produced from PSK-alpha by exopeptidase digestion. In terms of tissue distribution, expressed throughout the seedling. More abundant in fragments containing shoot or root apexes where cells proliferate vigorously.

Its subcellular location is the secreted. Its function is as follows. Promotes plant cell differentiation, organogenesis and somatic embryogenesis as well as cell proliferation. This chain is Phytosulfokines 1 (PSK1), found in Oryza sativa subsp. japonica (Rice).